Here is a 334-residue protein sequence, read N- to C-terminus: MKETIAYLGMGMWGFSLANLLANNGHRVVGWARNPALIEQLSVQRRHPAAPHISIPQNLSFTSHMEEALDGATMIVEGVTSAGMRPVLTQLKALTELRVPLVITSKGIEQNTGLLLSEIALEIFGRPAAQHLGYLSGPSIASEVLRGCPCSVVISAYNPDTLKQIHRAFLTPTFRVYPNSDLKGVALGGALKNVIAIACGISDGFRFGDNAKSGLVTRGLHEIRKFATIMGCRPDTLNGLAGLGDLCTTSFSAFSRNTLFGKLLAEGLTPEQAKTKIGMVVEGVYTALSAHQIATHHRIDMPITTSVYRVLYENLDIQEGIAQLLQRDTKEEYL.

The NADPH site is built by W13, R33, and K106. Positions 106, 137, and 139 each coordinate sn-glycerol 3-phosphate. A141 is an NADPH binding site. K192, D245, S255, R256, and N257 together coordinate sn-glycerol 3-phosphate. Catalysis depends on K192, which acts as the Proton acceptor. Residue R256 coordinates NADPH. NADPH-binding residues include V280 and E282.

It belongs to the NAD-dependent glycerol-3-phosphate dehydrogenase family.

The protein resides in the cytoplasm. The catalysed reaction is sn-glycerol 3-phosphate + NAD(+) = dihydroxyacetone phosphate + NADH + H(+). The enzyme catalyses sn-glycerol 3-phosphate + NADP(+) = dihydroxyacetone phosphate + NADPH + H(+). It participates in membrane lipid metabolism; glycerophospholipid metabolism. Functionally, catalyzes the reduction of the glycolytic intermediate dihydroxyacetone phosphate (DHAP) to sn-glycerol 3-phosphate (G3P), the key precursor for phospholipid synthesis. The polypeptide is Glycerol-3-phosphate dehydrogenase [NAD(P)+] (Chlamydia trachomatis serovar A (strain ATCC VR-571B / DSM 19440 / HAR-13)).